Reading from the N-terminus, the 483-residue chain is Aspartyl/glutamyl-tRNA(Asn/Gln) amidotransferase subunit B (483 aa).

It belongs to the GatB/GatE family. GatB subfamily. As to quaternary structure, heterotrimer of A, B and C subunits.

The enzyme catalyses L-glutamyl-tRNA(Gln) + L-glutamine + ATP + H2O = L-glutaminyl-tRNA(Gln) + L-glutamate + ADP + phosphate + H(+). The catalysed reaction is L-aspartyl-tRNA(Asn) + L-glutamine + ATP + H2O = L-asparaginyl-tRNA(Asn) + L-glutamate + ADP + phosphate + 2 H(+). Functionally, allows the formation of correctly charged Asn-tRNA(Asn) or Gln-tRNA(Gln) through the transamidation of misacylated Asp-tRNA(Asn) or Glu-tRNA(Gln) in organisms which lack either or both of asparaginyl-tRNA or glutaminyl-tRNA synthetases. The reaction takes place in the presence of glutamine and ATP through an activated phospho-Asp-tRNA(Asn) or phospho-Glu-tRNA(Gln). This Granulibacter bethesdensis (strain ATCC BAA-1260 / CGDNIH1) protein is Aspartyl/glutamyl-tRNA(Asn/Gln) amidotransferase subunit B.